We begin with the raw amino-acid sequence, 228 residues long: MASSTLSPVTQLCSSKSGLSSVSQCLLLKPMKINSHGLGKDKRMKVKCMATSIPADDRVPDMEKRNLMNLLLLGALSLPTAGMLVPYATFFAPPGSGGGSGGTPAKDALGNDVIASEWLKTHPPGNRTLTQGLKGDPTYLVVENDGTLATYGINAVCTHLGCVVPFNAAENKFICPCHGSQYNNQGRVVRGPAPLSLALAHADIDDGKVVFVPWVETDFRTGEAPWWA.

The N-terminal 49 residues, 1–49 (MASSTLSPVTQLCSSKSGLSSVSQCLLLKPMKINSHGLGKDKRMKVKCM), are a transit peptide targeting the chloroplast. The chain crosses the membrane as a helical span at residues 71–91 (LLLGALSLPTAGMLVPYATFF). A Rieske domain is found at 115–211 (ASEWLKTHPP…ADIDDGKVVF (97 aa)). 4 residues coordinate [2Fe-2S] cluster: C157, H159, C175, and H178. C162 and C177 are joined by a disulfide.

This sequence belongs to the Rieske iron-sulfur protein family. As to quaternary structure, the 4 large subunits of the cytochrome b6-f complex are cytochrome b6, subunit IV (17 kDa polypeptide, petD), cytochrome f and the Rieske protein, while the 4 small subunits are petG, petL, petM and petN. The complex functions as a dimer. It depends on [2Fe-2S] cluster as a cofactor.

Its subcellular location is the plastid. The protein resides in the chloroplast thylakoid membrane. It catalyses the reaction 2 oxidized [plastocyanin] + a plastoquinol + 2 H(+)(in) = 2 reduced [plastocyanin] + a plastoquinone + 4 H(+)(out). Functionally, component of the cytochrome b6-f complex, which mediates electron transfer between photosystem II (PSII) and photosystem I (PSI), cyclic electron flow around PSI, and state transitions. In Nicotiana tabacum (Common tobacco), this protein is Cytochrome b6-f complex iron-sulfur subunit 2, chloroplastic (petC2).